The following is a 232-amino-acid chain: Dehydrin DHN2 (232 aa).

The segment covering 1 to 12 (MSQYQNQYGAQT) has biased composition (polar residues). Disordered stretches follow at residues 1–92 (MSQY…STNT), 131–156 (PGTE…SGGG), and 173–232 (PGDK…CTGH). Residues 73-82 (THTGGVGGYG) show a composition bias toward gly residues. Over residues 131–140 (PGTEQSRTHT) the composition is skewed to basic and acidic residues. The span at 143 to 156 (TGYGSTGYGASGGG) shows a compositional bias: gly residues. The span at 200–223 (YVREEHRVDHGEKKGIMDKIKEKL) shows a compositional bias: basic and acidic residues.

Belongs to the plant dehydrin family.

The protein is Dehydrin DHN2 (DHN2) of Pisum sativum (Garden pea).